Here is a 250-residue protein sequence, read N- to C-terminus: Ribosomal RNA small subunit methyltransferase J (250 aa).

Residues 101–102, 117–118, 153–154, and D171 contribute to the S-adenosyl-L-methionine site; these read RD, ER, and SS.

This sequence belongs to the methyltransferase superfamily. RsmJ family.

The protein resides in the cytoplasm. The catalysed reaction is guanosine(1516) in 16S rRNA + S-adenosyl-L-methionine = N(2)-methylguanosine(1516) in 16S rRNA + S-adenosyl-L-homocysteine + H(+). In terms of biological role, specifically methylates the guanosine in position 1516 of 16S rRNA. In Erwinia tasmaniensis (strain DSM 17950 / CFBP 7177 / CIP 109463 / NCPPB 4357 / Et1/99), this protein is Ribosomal RNA small subunit methyltransferase J.